The primary structure comprises 427 residues: Adenylosuccinate synthetase (427 aa).

GTP contacts are provided by residues 12-18 and 40-42; these read GDEGKGK and GHT. Asp-13 serves as the catalytic Proton acceptor. Residues Asp-13 and Gly-40 each contribute to the Mg(2+) site. IMP-binding positions include 13 to 16, 38 to 41, Thr-128, Arg-142, Gln-223, Thr-238, and Arg-302; these read DEGK and NAGH. His-41 (proton donor) is an active-site residue. Substrate is bound at residue 298 to 304; sequence TTTGRPR. Residues Arg-304, 330 to 332, and 412 to 414 contribute to the GTP site; these read SID and SVG.

This sequence belongs to the adenylosuccinate synthetase family. In terms of assembly, homodimer. The cofactor is Mg(2+).

It localises to the cytoplasm. It catalyses the reaction IMP + L-aspartate + GTP = N(6)-(1,2-dicarboxyethyl)-AMP + GDP + phosphate + 2 H(+). It functions in the pathway purine metabolism; AMP biosynthesis via de novo pathway; AMP from IMP: step 1/2. Its function is as follows. Plays an important role in the de novo pathway of purine nucleotide biosynthesis. Catalyzes the first committed step in the biosynthesis of AMP from IMP. The chain is Adenylosuccinate synthetase from Staphylococcus epidermidis (strain ATCC 35984 / DSM 28319 / BCRC 17069 / CCUG 31568 / BM 3577 / RP62A).